A 467-amino-acid chain; its full sequence is MKESLKDRIRLWKRLYVNAFENALNAIPNVKGVLLAYNTNIDAIKYLDKDDLEKRVTEIGKEKVFEIIENPPEKISSIEELLGGILRSIKLGKAMEWFVESEEVRRYLREWGWDELRIGGQAGIMANLLGGVYRIPTIVHVPQNPKLQAELFVDGPIYVPVFEGNKLKLVHPKDAIAEEEELIHYIYEFPRGFQVFDVQAPRENRFIANADDYNARVYMRREFREGFEEITRNVELAIISGLQVLKEYYPDGTTYRDVLDRVESHLNILNRYNVKSHFEFAYTANRRVREALVELLPKFTSVGLNEVELASIMEIIGDEELAKEVLEGHIFSVIDAMNVLMDETGIERIHFHTYGYYLALTQYRGEEVRDALLFASLAAAAKAMKGNLERIEQIRDALSVPTNERAIVLEEELEKEFTEFENGLIDMVDRQLAFVPTKIVASPKSTVGIGDTISSSAFVSEFGMRKR.

In terms of domain architecture, ADPK spans 10–467; sequence RLWKRLYVNA…FVSEFGMRKR (458 aa). D-glucose-binding positions include Asp-42, Glu-96, Gly-120, 120–121, His-184, and Asp-211; that span reads GQ. A Mg(2+)-binding site is contributed by Glu-279. ADP is bound at residue Asn-305. Glu-308 serves as a coordination point for Mg(2+). ADP-binding positions include 352–353, Val-440, and Gly-450; that span reads HT. Asp-451 contacts D-glucose. Residue Asp-451 participates in Mg(2+) binding. Asp-451 (proton acceptor) is an active-site residue.

The protein belongs to the ADP-dependent glucokinase family. In terms of assembly, monomer. Requires Mg(2+) as cofactor.

The protein resides in the cytoplasm. It carries out the reaction D-glucose + ADP = D-glucose 6-phosphate + AMP + H(+). It catalyses the reaction D-glucosamine + ADP = D-glucosamine 6-phosphate + AMP + H(+). It participates in carbohydrate degradation; glycolysis. Catalyzes the ADP-dependent phosphorylation of D-glucose to D-glucose 6-phosphate and glucosamine to glucosamine 6-phosphate. Can also use CDP as the phosphoryl group donor and D-1,5-anhydroglucitol as the phosphoryl group acceptor. The chain is ADP-dependent glucose/glucosamine kinase from Thermococcus litoralis (strain ATCC 51850 / DSM 5473 / JCM 8560 / NS-C).